A 218-amino-acid polypeptide reads, in one-letter code: Phosphoribosylformylglycinamidine synthase subunit PurQ (218 aa).

Residues 2 to 218 enclose the Glutamine amidotransferase type-1 domain; it reads SIAVLRFPGT…GARMLRGLAC (217 aa). C86 acts as the Nucleophile in catalysis. Residues H195 and E197 contribute to the active site.

As to quaternary structure, part of the FGAM synthase complex composed of 1 PurL, 1 PurQ and 2 PurS subunits.

Its subcellular location is the cytoplasm. It carries out the reaction N(2)-formyl-N(1)-(5-phospho-beta-D-ribosyl)glycinamide + L-glutamine + ATP + H2O = 2-formamido-N(1)-(5-O-phospho-beta-D-ribosyl)acetamidine + L-glutamate + ADP + phosphate + H(+). It catalyses the reaction L-glutamine + H2O = L-glutamate + NH4(+). It participates in purine metabolism; IMP biosynthesis via de novo pathway; 5-amino-1-(5-phospho-D-ribosyl)imidazole from N(2)-formyl-N(1)-(5-phospho-D-ribosyl)glycinamide: step 1/2. In terms of biological role, part of the phosphoribosylformylglycinamidine synthase complex involved in the purines biosynthetic pathway. Catalyzes the ATP-dependent conversion of formylglycinamide ribonucleotide (FGAR) and glutamine to yield formylglycinamidine ribonucleotide (FGAM) and glutamate. The FGAM synthase complex is composed of three subunits. PurQ produces an ammonia molecule by converting glutamine to glutamate. PurL transfers the ammonia molecule to FGAR to form FGAM in an ATP-dependent manner. PurS interacts with PurQ and PurL and is thought to assist in the transfer of the ammonia molecule from PurQ to PurL. The chain is Phosphoribosylformylglycinamidine synthase subunit PurQ from Wolinella succinogenes (strain ATCC 29543 / DSM 1740 / CCUG 13145 / JCM 31913 / LMG 7466 / NCTC 11488 / FDC 602W) (Vibrio succinogenes).